Reading from the N-terminus, the 412-residue chain is Adipocyte plasma membrane-associated protein (412 aa).

Residues 1 to 32 (MTEADGLRQRRPLRPQVVTDDNRTPEAKGGSS) are disordered. Over 1–39 (MTEADGLRQRRPLRPQVVTDDNRTPEAKGGSSFSGRVFR) the chain is Cytoplasmic. Thr19 is subject to Phosphothreonine. The chain crosses the membrane as a helical span at residues 40–60 (ATFLMLAAFLTIPLLGALVLL). Topologically, residues 61–412 (DSPIDPEPLS…RAPYLCRLRL (352 aa)) are extracellular. The N-linked (GlcNAc...) asparagine glycan is linked to Asn159.

The protein belongs to the strictosidine synthase family.

It is found in the membrane. In terms of biological role, exhibits strong arylesterase activity with beta-naphthyl acetate and phenyl acetate. May play a role in adipocyte differentiation. In Bos taurus (Bovine), this protein is Adipocyte plasma membrane-associated protein (APMAP).